The chain runs to 251 residues: Hydroxyacylglutathione hydrolase GloB (251 aa).

Zn(2+) is bound by residues His53, His55, Asp57, His58, His110, and Asp127. Substrate is bound by residues 136-138 (RLF), 165-167 (HEY), and 245-248 (RSKK). Residue His165 coordinates Zn(2+).

Belongs to the metallo-beta-lactamase superfamily. Glyoxalase II family. In terms of assembly, monomer. Zn(2+) is required as a cofactor.

It catalyses the reaction an S-(2-hydroxyacyl)glutathione + H2O = a 2-hydroxy carboxylate + glutathione + H(+). The enzyme catalyses (R)-S-lactoylglutathione + H2O = (R)-lactate + glutathione + H(+). Its pathway is secondary metabolite metabolism; methylglyoxal degradation; (R)-lactate from methylglyoxal: step 2/2. With respect to regulation, is inhibited by Cu(2+). Its function is as follows. Type II glyoxalase that catalyzes the hydrolysis of (R)-S-lactoylglutathione to (R)-lactate and glutathione. Is more efficient than the isozyme GloC, and plays a major contribution to methylglyoxal (MG) detoxification in E.coli. The two isoenzymes have additive effects and ensure maximal MG degradation. In Escherichia coli (strain K12), this protein is Hydroxyacylglutathione hydrolase GloB.